Here is a 597-residue protein sequence, read N- to C-terminus: Arginine--tRNA ligase (597 aa).

A 'HIGH' region motif is present at residues 138–148 (ANPTGPMHVGH).

Belongs to the class-I aminoacyl-tRNA synthetase family. Monomer.

The protein localises to the cytoplasm. The enzyme catalyses tRNA(Arg) + L-arginine + ATP = L-arginyl-tRNA(Arg) + AMP + diphosphate. This chain is Arginine--tRNA ligase, found in Nitrobacter winogradskyi (strain ATCC 25391 / DSM 10237 / CIP 104748 / NCIMB 11846 / Nb-255).